We begin with the raw amino-acid sequence, 478 residues long: Early growth response protein 4 (478 aa).

Residues 275-302 (TEGLPALLTPPGGEGGSGGEGGEFLAAP) are disordered. Positions 286-296 (GGEGGSGGEGG) are enriched in gly residues. C2H2-type zinc fingers lie at residues 372-396 (FACP…LRIH), 402-424 (FQCR…VRTH), and 430-452 (FACD…SKVH).

It belongs to the EGR C2H2-type zinc-finger protein family.

It localises to the nucleus. Functionally, transcriptional regulator. Recognizes and binds to the DNA sequence 5'-GCGGGGGCG-3' (GSG). Activates the transcription of target genes whose products are required for mitogenesis and differentiation. This Mus musculus (Mouse) protein is Early growth response protein 4 (Egr4).